A 240-amino-acid polypeptide reads, in one-letter code: Biosynthetic peptidoglycan transglycosylase (240 aa).

The chain crosses the membrane as a helical span at residues 12 to 31; it reads ALMWFMVGSVLLVLLLRFVP.

Belongs to the glycosyltransferase 51 family.

It is found in the cell inner membrane. The catalysed reaction is [GlcNAc-(1-&gt;4)-Mur2Ac(oyl-L-Ala-gamma-D-Glu-L-Lys-D-Ala-D-Ala)](n)-di-trans,octa-cis-undecaprenyl diphosphate + beta-D-GlcNAc-(1-&gt;4)-Mur2Ac(oyl-L-Ala-gamma-D-Glu-L-Lys-D-Ala-D-Ala)-di-trans,octa-cis-undecaprenyl diphosphate = [GlcNAc-(1-&gt;4)-Mur2Ac(oyl-L-Ala-gamma-D-Glu-L-Lys-D-Ala-D-Ala)](n+1)-di-trans,octa-cis-undecaprenyl diphosphate + di-trans,octa-cis-undecaprenyl diphosphate + H(+). Its pathway is cell wall biogenesis; peptidoglycan biosynthesis. Its function is as follows. Peptidoglycan polymerase that catalyzes glycan chain elongation from lipid-linked precursors. The chain is Biosynthetic peptidoglycan transglycosylase from Pseudomonas fluorescens (strain ATCC BAA-477 / NRRL B-23932 / Pf-5).